The following is a 110-amino-acid chain: Vacuolar ATPase assembly integral membrane protein VMA21 (110 aa).

The disordered stretch occupies residues 1–28 (MTTRRIIGQDGEEKTYLDVDPRGPPGPS). Residues 1–44 (MTTRRIIGQDGEEKTYLDVDPRGPPGPSNISPAVPASVIWKLMS) lie on the Cytoplasmic side of the membrane. Basic and acidic residues predominate over residues 11 to 21 (GEEKTYLDVDP). Residues 45–65 (FTFAMITLPIGTYFFTVNYVF) traverse the membrane as a helical segment. Over 66 to 71 (GGNATY) the chain is Lumenal. A helical transmembrane segment spans residues 72 to 92 (AGALAAIMANVVLIAYVIMAF). At 93–110 (KDDQAEQAEDAREAKKEL) the chain is on the cytoplasmic side. Residues 107–110 (KKEL) carry the Prevents secretion from ER motif.

This sequence belongs to the VMA21 family.

It localises to the endoplasmic reticulum membrane. The protein resides in the endoplasmic reticulum-Golgi intermediate compartment membrane. The protein localises to the cytoplasmic vesicle. Its subcellular location is the COPII-coated vesicle membrane. Functionally, required for the assembly of the V0 complex of the vacuolar ATPase (V-ATPase) in the endoplasmic reticulum. In Phaeosphaeria nodorum (strain SN15 / ATCC MYA-4574 / FGSC 10173) (Glume blotch fungus), this protein is Vacuolar ATPase assembly integral membrane protein VMA21.